Consider the following 368-residue polypeptide: Ferrochelatase (368 aa).

Residues histidine 209 and glutamate 290 each coordinate Fe cation. A disordered region spans residues 347–368 (REEQEQQAHISREEARRLGADQ).

Belongs to the ferrochelatase family.

It localises to the cytoplasm. The catalysed reaction is heme b + 2 H(+) = protoporphyrin IX + Fe(2+). Its pathway is porphyrin-containing compound metabolism; protoheme biosynthesis; protoheme from protoporphyrin-IX: step 1/1. Functionally, catalyzes the ferrous insertion into protoporphyrin IX. The chain is Ferrochelatase from Janthinobacterium sp. (strain Marseille) (Minibacterium massiliensis).